Here is a 325-residue protein sequence, read N- to C-terminus: NADH-quinone oxidoreductase subunit H (325 aa).

A run of 8 helical transmembrane segments spans residues 11-31 (ILIS…CGAF), 81-101 (AIFT…FAIV), 114-134 (IGIL…LFAG), 154-174 (LSYE…AGSF), 186-206 (VWNV…GVAV), 237-257 (FFVG…TLFF), 265-285 (LPPF…FILI), and 304-324 (VCLP…LYNA).

The protein belongs to the complex I subunit 1 family. NDH-1 is composed of 13 different subunits. Subunits NuoA, H, J, K, L, M, N constitute the membrane sector of the complex.

The protein localises to the cell inner membrane. It catalyses the reaction a quinone + NADH + 5 H(+)(in) = a quinol + NAD(+) + 4 H(+)(out). NDH-1 shuttles electrons from NADH, via FMN and iron-sulfur (Fe-S) centers, to quinones in the respiratory chain. The immediate electron acceptor for the enzyme in this species is believed to be ubiquinone. Couples the redox reaction to proton translocation (for every two electrons transferred, four hydrogen ions are translocated across the cytoplasmic membrane), and thus conserves the redox energy in a proton gradient. This subunit may bind ubiquinone. This is NADH-quinone oxidoreductase subunit H from Yersinia pseudotuberculosis serotype O:1b (strain IP 31758).